The sequence spans 271 residues: Tryptophan synthase alpha chain (271 aa).

Catalysis depends on proton acceptor residues glutamate 59 and aspartate 70.

This sequence belongs to the TrpA family. As to quaternary structure, tetramer of two alpha and two beta chains.

It carries out the reaction (1S,2R)-1-C-(indol-3-yl)glycerol 3-phosphate + L-serine = D-glyceraldehyde 3-phosphate + L-tryptophan + H2O. It participates in amino-acid biosynthesis; L-tryptophan biosynthesis; L-tryptophan from chorismate: step 5/5. Its function is as follows. The alpha subunit is responsible for the aldol cleavage of indoleglycerol phosphate to indole and glyceraldehyde 3-phosphate. The sequence is that of Tryptophan synthase alpha chain from Methanosarcina mazei (strain ATCC BAA-159 / DSM 3647 / Goe1 / Go1 / JCM 11833 / OCM 88) (Methanosarcina frisia).